A 362-amino-acid chain; its full sequence is Probable secreted beta-glucosidase UTH1 (362 aa).

An N-terminal signal peptide occupies residues 1-17; that stretch reads MKLSALLALSASTAVLA.

This sequence belongs to the SUN family.

It localises to the mitochondrion outer membrane. The protein resides in the secreted. The protein localises to the cell wall. Functionally, involved in aging, oxidative stress response, and in the regulation of mitochondrial biogenesis. Inactivation of UTH1 increases life span, leads to higher resistance to heat stress and to hydrogen peroxide, and increases sensitivity to the superoxide radical-generating drug paraquat and to copper. Also required for the selective autophagic degradation of mitochondria (mitophagy) in response to nitrogen starvation. May play a role in cell wall morphogenesis and septation. Involved in the remodeling of the cell wall during the various phases of yeast culture development and under various environmental conditions and plays a role in septation. Involved in cell sensitivity to boric acid. This chain is Probable secreted beta-glucosidase UTH1 (UTH1), found in Saccharomyces cerevisiae (strain YJM789) (Baker's yeast).